Here is a 563-residue protein sequence, read N- to C-terminus: Light-independent protochlorophyllide reductase subunit B (563 aa).

D36 serves as a coordination point for [4Fe-4S] cluster. The Proton donor role is filled by D349. 484 to 485 contributes to the substrate binding site; sequence GM.

The protein belongs to the ChlB/BchB/BchZ family. As to quaternary structure, protochlorophyllide reductase is composed of three subunits; ChlL, ChlN and ChlB. Forms a heterotetramer of two ChlB and two ChlN subunits. Requires [4Fe-4S] cluster as cofactor.

It is found in the plastid. It localises to the chloroplast. The enzyme catalyses chlorophyllide a + oxidized 2[4Fe-4S]-[ferredoxin] + 2 ADP + 2 phosphate = protochlorophyllide a + reduced 2[4Fe-4S]-[ferredoxin] + 2 ATP + 2 H2O. It participates in porphyrin-containing compound metabolism; chlorophyll biosynthesis (light-independent). Component of the dark-operative protochlorophyllide reductase (DPOR) that uses Mg-ATP and reduced ferredoxin to reduce ring D of protochlorophyllide (Pchlide) to form chlorophyllide a (Chlide). This reaction is light-independent. The NB-protein (ChlN-ChlB) is the catalytic component of the complex. The chain is Light-independent protochlorophyllide reductase subunit B from Chlamydomonas moewusii (Chlamydomonas eugametos).